The chain runs to 409 residues: MAQNFTKLNPQFENIIFEHDDNQMVLNFGPQHPSSHGQLRLILELEGERIIKATPEIGYLHRGCEKLGENMTYNEYMPTTDRLDYTSSASNNYAYAHAVETLLNLEIPRRAQVIRTILLELNRMISHIFFISVHALDVGAMSVFLYAFKTREHGLDLMEDYCGARLTHNAIRIGGVPLDLPPNWLEGLKKFLGEMRECKKLIQGLLDKNRIWRMRLENVGVVTPKMAQSWGMSGIMLRGTGIAYDIRKEEPYELYRELDFDVPVGNYGDSYDRYCLYMLEIDESIRIIEQLIPMYAKTDTPIMAQNPHYISAPKEDIMTQNYALMQHFVLVAQGMRPPIGEVYAPTESPKGELGFFIHSEGESYPHRLKIRAPSFYHIGSLGDILVGQYLADAVTVIGSTNAVFGEVDR.

The protein belongs to the complex I 49 kDa subunit family. As to quaternary structure, NDH-1 is composed of 14 different subunits. Subunits NuoB, C, D, E, F, and G constitute the peripheral sector of the complex.

It is found in the cell inner membrane. It catalyses the reaction a quinone + NADH + 5 H(+)(in) = a quinol + NAD(+) + 4 H(+)(out). In terms of biological role, NDH-1 shuttles electrons from NADH, via FMN and iron-sulfur (Fe-S) centers, to quinones in the respiratory chain. The immediate electron acceptor for the enzyme in this species is believed to be ubiquinone. Couples the redox reaction to proton translocation (for every two electrons transferred, four hydrogen ions are translocated across the cytoplasmic membrane), and thus conserves the redox energy in a proton gradient. This Helicobacter acinonychis (strain Sheeba) protein is NADH-quinone oxidoreductase subunit D.